A 326-amino-acid polypeptide reads, in one-letter code: Acetyl-coenzyme A carboxylase carboxyl transferase subunit alpha (326 aa).

A CoA carboxyltransferase C-terminal domain is found at 44–298; that stretch reads KLETRAMQLR…KQALLDNLDE (255 aa).

Belongs to the AccA family. As to quaternary structure, acetyl-CoA carboxylase is a heterohexamer composed of biotin carboxyl carrier protein (AccB), biotin carboxylase (AccC) and two subunits each of ACCase subunit alpha (AccA) and ACCase subunit beta (AccD).

Its subcellular location is the cytoplasm. It carries out the reaction N(6)-carboxybiotinyl-L-lysyl-[protein] + acetyl-CoA = N(6)-biotinyl-L-lysyl-[protein] + malonyl-CoA. It participates in lipid metabolism; malonyl-CoA biosynthesis; malonyl-CoA from acetyl-CoA: step 1/1. Functionally, component of the acetyl coenzyme A carboxylase (ACC) complex. First, biotin carboxylase catalyzes the carboxylation of biotin on its carrier protein (BCCP) and then the CO(2) group is transferred by the carboxyltransferase to acetyl-CoA to form malonyl-CoA. In Trichormus variabilis (strain ATCC 29413 / PCC 7937) (Anabaena variabilis), this protein is Acetyl-coenzyme A carboxylase carboxyl transferase subunit alpha.